The following is a 625-amino-acid chain: Somatic embryogenesis receptor kinase 1 (625 aa).

A signal peptide spans M1 to A26. Topologically, residues N27–G238 are extracellular. C58 and C65 are joined by a disulfide. Leucine-rich repeat receptor-like protein kinase binding stretches follow at residues T59–N78 and Y97–S102. A brassinolide-binding site is contributed by F61 to H62. LRR repeat units follow at residues L92–L116, N118–L140, S141–I164, and T165–L189. Residues N104 and N115 are each glycosylated (N-linked (GlcNAc...) asparagine). Leucine-rich repeat receptor-like protein kinase binding regions lie at residues D123 to L126 and F145 to R147. N-linked (GlcNAc...) asparagine glycosylation is found at N150, N163, and N184. Positions D171–S194 are leucine-rich repeat receptor-like protein kinase binding. C202 and C210 are oxidised to a cystine. Residues A239 to F259 traverse the membrane as a helical segment. Residues A260–R625 are Cytoplasmic-facing. Phosphoserine occurs at positions 291, 299, and 303. A Protein kinase domain is found at F302–Q589. L308–V316 is a binding site for ATP. T325 is modified (phosphothreonine). K330 serves as a coordination point for ATP. A phosphothreonine mark is found at T337 and T346. 4 positions are modified to phosphoserine: S352, S383, S386, and S394. At T402 the chain carries Phosphothreonine. A Phosphoserine modification is found at S415. D429 acts as the Proton acceptor in catalysis. Y456 carries the phosphotyrosine modification. A phosphothreonine mark is found at T459, T462, T463, and T468. Y476 is subject to Phosphotyrosine. Residue S478 is modified to Phosphoserine. T479 carries the phosphothreonine modification. S483 bears the Phosphoserine mark. The residue at position 541 (T541) is a Phosphothreonine. Y543 bears the Phosphotyrosine mark. T559 bears the Phosphothreonine mark. Phosphoserine is present on residues S606 and S612. T613 bears the Phosphothreonine mark. Y614 is subject to Phosphotyrosine. Residue S622 is modified to Phosphoserine.

Belongs to the protein kinase superfamily. Ser/Thr protein kinase family. In terms of assembly, monomer, homo- and heterodimer. Interacts with KAPP, CDC48A, GRF6 or GRF7, SERK2, BRI1 and SERK3/BAK1 to form the SERK1 signaling complex. Bind to BRI1 in a brassinolide-dependent manner. Heterodimer with PSKR1. Interacts with the EF-Tu receptor EFR and FLS2 in a specific ligand-induced manner. Interacts with ERECTA in a EPF2-induced manner. Interacts with ERL1 in a EPF1-induced manner. Interacts with TMM. In the presence of the signal peptide RGF1, interacts with RGI1/RGFR4/RCH2, RGI2/RGFR3/RCH1, RGI3/RGFR1, RGI4/RGFR2/SKM2 and RGI5/RGFR5. Requires Mg(2+) as cofactor. Post-translationally, glycosylated. Important for targeting to the plasma membrane. In terms of processing, intermolecular autophosphorylation. The catalytic activity of SERK1 depends on the presence of a phosphorylated Thr residue in SERK1. The phosphorylation is induced by brassinosteroids. Transphosphorylation by BRI1 occurs only on Ser-299 and Thr-462. Dephosphorylation of threonine residues by the kinase-associated protein phosphatase (KAPP) is involved in SERK1 endocytosis. In terms of tissue distribution, expressed in flowers, tapetum, developing microspores, all cells of the embryo sac, provascular strands and developing vascular bundles. Low expression in adult vascular tissue. Detected in root meristem.

Its subcellular location is the cell membrane. The protein resides in the endoplasmic reticulum membrane. It carries out the reaction L-seryl-[protein] + ATP = O-phospho-L-seryl-[protein] + ADP + H(+). The enzyme catalyses L-threonyl-[protein] + ATP = O-phospho-L-threonyl-[protein] + ADP + H(+). It catalyses the reaction L-tyrosyl-[protein] + ATP = O-phospho-L-tyrosyl-[protein] + ADP + H(+). Its activity is regulated as follows. Inhibited by manganese. Dual specificity kinase acting on both serine/threonine- and tyrosine-containing substrates. Phosphorylates BRI1 on 'Ser-887' and CDC48 on at least one threonine residue and on 'Ser-41'. Confers embryogenic competence. Acts redundantly with SERK2 as a control point for sporophytic development controlling male gametophyte production. Involved in the brassinolide signaling pathway. Probably required during small peptide (e.g. RGF1) signaling. Involved in the perception of phytosulfokine and subsequent signal transduction. Acts as a RLK5 coreceptor and promotes high-affinity IDA sensing, thus being a positive regulator of floral abscission. This Arabidopsis thaliana (Mouse-ear cress) protein is Somatic embryogenesis receptor kinase 1.